The following is a 162-amino-acid chain: uncharacterized protein (162 aa).

3 helical membrane passes run 28-50 (ALAL…VCFF), 57-76 (LLLL…DPWL), and 108-130 (YNTM…YALA).

It is found in the cell membrane. This is an uncharacterized protein from Treponema pallidum (strain Nichols).